The primary structure comprises 811 residues: Leucine--tRNA ligase (811 aa).

A 'HIGH' region motif is present at residues S38 to H49. Residues K570–S574 carry the 'KMSKS' region motif. K573 contributes to the ATP binding site.

Belongs to the class-I aminoacyl-tRNA synthetase family.

The protein localises to the cytoplasm. The enzyme catalyses tRNA(Leu) + L-leucine + ATP = L-leucyl-tRNA(Leu) + AMP + diphosphate. The chain is Leucine--tRNA ligase from Clostridium kluyveri (strain ATCC 8527 / DSM 555 / NBRC 12016 / NCIMB 10680 / K1).